Here is a 772-residue protein sequence, read N- to C-terminus: Polyribonucleotide nucleotidyltransferase (772 aa).

2 residues coordinate Mg(2+): Asp488 and Asp494. A KH domain is found at 555 to 614 (PRLTTLKINPEKIRDVIGKGGAVIRGLQEETGTTINIDEDGTITIASTDPEKAEFAKKRI). The region spanning 624–692 (GKVYEGPVTK…EKGRVKLSMK (69 aa)) is the S1 motif domain. The disordered stretch occupies residues 690-772 (SMKALTERPA…QPYAPRDSQE (83 aa)). The segment covering 703–740 (YSERPPREDRGDRGDRGGERRERSDRGDRGGDRGERAP) has biased composition (basic and acidic residues). Positions 743–757 (NSEQQQQPRSNEQQP) are enriched in low complexity.

It belongs to the polyribonucleotide nucleotidyltransferase family. The cofactor is Mg(2+).

It localises to the cytoplasm. The enzyme catalyses RNA(n+1) + phosphate = RNA(n) + a ribonucleoside 5'-diphosphate. Its function is as follows. Involved in mRNA degradation. Catalyzes the phosphorolysis of single-stranded polyribonucleotides processively in the 3'- to 5'-direction. This Variovorax paradoxus (strain S110) protein is Polyribonucleotide nucleotidyltransferase.